A 608-amino-acid chain; its full sequence is NADH-quinone oxidoreductase subunit C/D (608 aa).

Residues 1–199 (MSAASSLAPQ…EPFHLSTEKE (199 aa)) form an NADH dehydrogenase I subunit C region. Residues 223-608 (DFMFLNLGPN…IDFVMADVDR (386 aa)) form an NADH dehydrogenase I subunit D region.

It in the N-terminal section; belongs to the complex I 30 kDa subunit family. This sequence in the C-terminal section; belongs to the complex I 49 kDa subunit family. NDH-1 is composed of 13 different subunits. Subunits NuoB, CD, E, F, and G constitute the peripheral sector of the complex.

Its subcellular location is the cell inner membrane. It carries out the reaction a quinone + NADH + 5 H(+)(in) = a quinol + NAD(+) + 4 H(+)(out). NDH-1 shuttles electrons from NADH, via FMN and iron-sulfur (Fe-S) centers, to quinones in the respiratory chain. The immediate electron acceptor for the enzyme in this species is believed to be ubiquinone. Couples the redox reaction to proton translocation (for every two electrons transferred, four hydrogen ions are translocated across the cytoplasmic membrane), and thus conserves the redox energy in a proton gradient. The chain is NADH-quinone oxidoreductase subunit C/D from Nitrosospira multiformis (strain ATCC 25196 / NCIMB 11849 / C 71).